The primary structure comprises 388 residues: Staphopain A (388 aa).

An N-terminal signal peptide occupies residues methionine 1–alanine 25. Residues glutamate 26 to threonine 214 constitute a propeptide that is removed on maturation. Active-site residues include cysteine 238, histidine 334, and asparagine 355.

The protein belongs to the peptidase C47 family. As to quaternary structure, in the cytoplasm, prematurely activated/folded ScpA forms a stable non-covalent complex with ScpB. Cleavage leads to the activation of ScpA probably by an auto-catalytic manner.

The protein localises to the secreted. The enzyme catalyses Broad endopeptidase action on proteins including elastin, but rather limited hydrolysis of small-molecule substrates. Assays are conveniently made with hemoglobin, casein or Z-Phe-Arg-NHMec as substrate.. Prematurely activated/folded staphopain A is inhibited by staphostatin A (ScpB), which is probably required to protect staphylococcal cytoplasmic proteins from degradation by ScpA. Its function is as follows. Cysteine protease that plays an important role in the inhibition of host innate immune response. Cleaves host elastins found in connective tissues, pulmonary surfactant protein A in the lungs, and the chemokine receptor CXCR2 on leukocytes. Proteolytic cleavage of surfactant protein A impairs bacterial phagocytosis by neutrophils while CXCR2 degradation blocks neutrophil activation and chemotaxis. Additionally, promotes vascular leakage by activating the plasma kallikerin/kinin system, resulting in hypotension. The sequence is that of Staphopain A (sspP) from Staphylococcus aureus (strain Mu50 / ATCC 700699).